Here is a 108-residue protein sequence, read N- to C-terminus: Urease subunit beta (108 aa).

The protein belongs to the urease beta subunit family. As to quaternary structure, heterotrimer of UreA (gamma), UreB (beta) and UreC (alpha) subunits. Three heterotrimers associate to form the active enzyme.

The protein localises to the cytoplasm. It catalyses the reaction urea + 2 H2O + H(+) = hydrogencarbonate + 2 NH4(+). It functions in the pathway nitrogen metabolism; urea degradation; CO(2) and NH(3) from urea (urease route): step 1/1. This Nocardia farcinica (strain IFM 10152) protein is Urease subunit beta.